We begin with the raw amino-acid sequence, 318 residues long: NF-kappa-B inhibitor alpha (318 aa).

The segment at 1-44 (MLSAHRPAEPPAVEGCEPPRKERQGGLLPPDDRHDSGLDSMKEE) is disordered. Residues 17-44 (EPPRKERQGGLLPPDDRHDSGLDSMKEE) show a composition bias toward basic and acidic residues. Residue K21 forms a Glycyl lysine isopeptide (Lys-Gly) (interchain with G-Cter in ubiquitin) linkage. At S36 the chain carries Phosphoserine; by IKKA and IKKB. S40 carries the post-translational modification Phosphoserine; by IKKA, IKKB and IKKE. At Y46 the chain carries Phosphotyrosine; by Tyr-kinases. 4 ANK repeats span residues 114–143 (LSQT…DLDV), 147–176 (RGNT…PHHL), 186–215 (NGHT…DVNA), and 220–249 (NGRT…DVNK).

This sequence belongs to the NF-kappa-B inhibitor family. Phosphorylated at Ser-36 and Ser-40 by IKKA/CHUK and IKKB/IKBKB; disables inhibition of NF-kappa-B DNA-binding activity. Phosphorylation at positions 36 and 40 is prerequisite to polyubiquitination and subsequent degradation. In terms of processing, monoubiquitinated at Lys-21 following phosphorylation at Ser-36 and Ser-40. The resulting polyubiquitination leads to protein degradation. Post-translationally, hydroxylated by HIF1AN. As to expression, highly expressed in lymph node, thymus followed by liver, brain, muscle, kidney, gastrointestinal and reproductive tract.

Its subcellular location is the cytoplasm. The protein resides in the nucleus. Inhibits the activity of dimeric NF-kappa-B/REL complexes by trapping REL (RELA/p65 and NFKB1/p50) dimers in the cytoplasm by masking their nuclear localization signals. On cellular stimulation by immune and pro-inflammatory responses, becomes phosphorylated promoting ubiquitination and degradation, enabling the dimeric RELA to translocate to the nucleus and activate transcription. The polypeptide is NF-kappa-B inhibitor alpha (NFKBIA) (Gallus gallus (Chicken)).